A 286-amino-acid polypeptide reads, in one-letter code: Polyamine aminopropyltransferase (286 aa).

The 234-residue stretch at 5–238 folds into the PABS domain; that stretch reads TMWHETLHDQ…GIMTFAWATD (234 aa). Gln-33 is an S-methyl-5'-thioadenosine binding site. The spermidine site is built by His-64 and Asp-88. S-methyl-5'-thioadenosine contacts are provided by residues Glu-108 and 140–141; that span reads DG. Residue Asp-158 is the Proton acceptor of the active site. Spermidine is bound at residue 158 to 161; sequence DCTD. Pro-165 is an S-methyl-5'-thioadenosine binding site.

The protein belongs to the spermidine/spermine synthase family. Homodimer or homotetramer.

The protein resides in the cytoplasm. The enzyme catalyses S-adenosyl 3-(methylsulfanyl)propylamine + putrescine = S-methyl-5'-thioadenosine + spermidine + H(+). It participates in amine and polyamine biosynthesis; spermidine biosynthesis; spermidine from putrescine: step 1/1. In terms of biological role, catalyzes the irreversible transfer of a propylamine group from the amino donor S-adenosylmethioninamine (decarboxy-AdoMet) to putrescine (1,4-diaminobutane) to yield spermidine. This Salmonella typhi protein is Polyamine aminopropyltransferase.